A 191-amino-acid chain; its full sequence is Heme-binding protein 1 (191 aa).

It belongs to the HEBP family. Monomer.

The protein resides in the cytoplasm. Its function is as follows. May bind free porphyrinogens that may be present in the cell and thus facilitate removal of these potentially toxic compound. Binds with a high affinity to one molecule of heme or porphyrins. It binds metalloporphyrins, free porphyrins and N-methylprotoporphyrin with similar affinities. This chain is Heme-binding protein 1 (HEBP1), found in Bos taurus (Bovine).